The sequence spans 514 residues: CENP-B homolog protein 2 (514 aa).

The HTH CENPB-type domain occupies 70–145; that stretch reads QIRRNRQGKY…KKRCLKHGLK (76 aa). The DDE-1 domain maps to 172-384; that stretch reads FDPKDIFNMD…FEPSIIYNCF (213 aa).

It is found in the nucleus. The protein resides in the chromosome. It localises to the centromere. Binds to the central core and core-associated repeat regions of centromeric heterochromatin. The sequence is that of CENP-B homolog protein 2 (cbh2) from Schizosaccharomyces pombe (strain 972 / ATCC 24843) (Fission yeast).